Consider the following 196-residue polypeptide: MVAETGTGLFSAHKITEELASTSLDSGVHLLFDIHDRTFQALPDFLAEHRYQEVNDIRNTVFQKAFDTNLSIYEYLVHHPQLQAHMQDAMKLHQPEGDWLSVFPADEIVGNQQTAPDPARVLFVDIGGGMGQQCIRFRERYPDLAGRVILQDIPQTINRVPKPMPNGIEAVPHSFEDPQPIKSKSPRLDNLARERL.

S-adenosyl-L-methionine contacts are provided by residues 127-128 (GG), D152, and 174-175 (SF). A disordered region spans residues 166 to 196 (NGIEAVPHSFEDPQPIKSKSPRLDNLARERL). Over residues 186-196 (PRLDNLARERL) the composition is skewed to basic and acidic residues.

It belongs to the class I-like SAM-binding methyltransferase superfamily. Cation-independent O-methyltransferase family.

It functions in the pathway secondary metabolite biosynthesis; terpenoid biosynthesis. O-methyltransferase; part of the gene cluster that mediates the biosynthesis of diterpenoid pyrones. The first step of the pathway is the synthesis of the alpha-pyrone moiety by the polyketide synthase dpmpA via condensation of one acetyl-CoA starter unit with 3 malonyl-CoA units and 2 methylations. The alpha-pyrone is then combined with geranylgeranyl pyrophosphate (GGPP) formed by the GGPP synthase dpmpD through the action of the prenyltransferase dpmpC to yield a linear alpha-pyrone diterpenoid. Subsequent steps in the diterpenoid pyrone biosynthetic pathway involve the decalin core formation, which is initiated by the epoxidation of the C10-C11 olefin by the FAD-dependent oxidoreductase dpmpE, and is followed by a cyclization cascade catalyzed by the terpene cyclase dpmpB. The short chain dehydrogenase/reductase dpmpG then oxidizes the 8S hydroxy group to a ketone and the short chain dehydrogenase/reductase dpmpH reduces the ketone to the 8R hydroxy group to yield higginsianin B. Higginsianin B is further methylated by the methyltransferase dpmpI to produce the intermediate named FDDP B. The cytochrome P450 monooxygenase dpmpJ then oxidizes the C-26 methyl to primary alcohol, producing the final diterpenoid pyrone with a C-26 primary alcohol on the gamma-pyrone moiety named FDDP C. The protein is O-methyltransferase dpmpI of Macrophomina phaseolina (strain MS6) (Charcoal rot fungus).